Consider the following 198-residue polypeptide: DNA polymerase zeta subunit 2 (198 aa).

Residues 4-196 form the HORMA domain; that stretch reads EIKADIIVEA…DLGLKMDVLI (193 aa).

It belongs to the MAD2 family. In terms of assembly, accessory subunit of the zeta DNA polymerase complex, which consists of the catalytic component PolZ1/DNApol-zeta and PolZ2/Rev7. Interacts with the apurinic/apyrimidinic (AP) endonuclease Rrp1 (via the N-terminus).

As the accessory component of the DNA polymerase zeta complex, involved in translesion DNA synthesis (TLS) and various DNA repair mechanisms. Promotes the apurinic/apyrimidinic (AP) endonuclease activity of Rrp1 and is therefore likely to be involved in the base excision repair (BER) pathway responsible for repair of DNA lesions. It does not appear to influence the synthesis activity of the catalytic component Dmpol-zeta. This is DNA polymerase zeta subunit 2 from Drosophila melanogaster (Fruit fly).